A 517-amino-acid polypeptide reads, in one-letter code: Protein translocase subunit SecD (517 aa).

A run of 6 helical transmembrane segments spans residues 5 to 25 (LRWI…FPLD), 357 to 377 (IWAG…YYKF), 380 to 400 (FIAS…MGMF), 407 to 427 (PGIA…VLIF), 455 to 475 (IIDS…FGTG), and 479 to 499 (GFAV…VTLS).

This sequence belongs to the SecD/SecF family. SecD subfamily. As to quaternary structure, forms a complex with SecF. Part of the essential Sec protein translocation apparatus which comprises SecA, SecYEG and auxiliary proteins SecDF. Other proteins may also be involved.

Its subcellular location is the cell inner membrane. Its function is as follows. Part of the Sec protein translocase complex. Interacts with the SecYEG preprotein conducting channel. SecDF uses the proton motive force (PMF) to complete protein translocation after the ATP-dependent function of SecA. The sequence is that of Protein translocase subunit SecD from Calditerrivibrio nitroreducens (strain DSM 19672 / NBRC 101217 / Yu37-1).